Consider the following 98-residue polypeptide: Integration host factor subunit beta (98 aa).

Residues arginine 59–glycine 98 are disordered. Over residues proline 82–asparagine 91 the composition is skewed to basic and acidic residues.

This sequence belongs to the bacterial histone-like protein family. As to quaternary structure, heterodimer of an alpha and a beta chain.

Functionally, this protein is one of the two subunits of integration host factor, a specific DNA-binding protein that functions in genetic recombination as well as in transcriptional and translational control. This chain is Integration host factor subunit beta, found in Saccharophagus degradans (strain 2-40 / ATCC 43961 / DSM 17024).